A 149-amino-acid chain; its full sequence is UPAR/Ly6 domain-containing protein bou (149 aa).

The signal sequence occupies residues 1 to 31 (MWPPKHAHIGWLSSLALVVLLMSLQMVMVSG). Residues 32 to 126 (IECYVCDTSD…YTCDTDGCNA (95 aa)) lie on the Extracellular side of the membrane. Cystine bridges form between C34–C74, C37–C48, C65–C91, C100–C115, and C119–C124. N64 is a glycosylation site (N-linked (GlcNAc...) asparagine). N125 is lipidated: GPI-anchor amidated asparagine. Residues 126–149 (AAGRLELEWGVAAALLTLTWLLRH) constitute a propeptide, removed in mature form. Residues 127–147 (AGRLELEWGVAAALLTLTWLL) form a helical membrane-spanning segment. Residues 148–149 (RH) lie on the Cytoplasmic side of the membrane.

GPI-anchored.

It localises to the cell membrane. The protein localises to the cell junction. It is found in the septate junction. The protein resides in the cytoplasm. Its subcellular location is the cell cortex. It localises to the secreted. The protein localises to the apicolateral cell membrane. In terms of biological role, involved in tracheal paracellular barrier functions mediated by epithelial cell septate junctions. Involved in paracellular barrier functions mediated by glial cell septate junctions in the peripheral nervous system, including the chordotonal organs, but not the hemolymph-brain barrier (the insect blood-brain barrier) of the central nervous system. Required for septate junction assembly, possibly by organizing the preassembly and transport of septate junction proteins such as dlg1/disks large 1, Nrx-IV/Neurexin-IV and the claudin protein kune. Involved in chitin fiber organization during tracheal development. Secreted, possibly in association with extracellular vesicles, to act non-autonomously on tissues distant from its site of expression. This chain is UPAR/Ly6 domain-containing protein bou, found in Drosophila melanogaster (Fruit fly).